We begin with the raw amino-acid sequence, 696 residues long: Tensin-4 (696 aa).

A signal peptide spans 1–14 (MSSSLLAGGHMVSL). Disordered stretches follow at residues 157-246 (LDGP…RAPQ), 271-344 (SLPH…CPAS), and 356-416 (LING…KDMQ). Residues 192–203 (SSSNESLIFSGN) show a composition bias toward polar residues. Serine 230 carries the phosphoserine modification. The span at 271 to 304 (SLPHSSLSSYPSSSRSLGSPASSSSSLHSLDRGS) shows a compositional bias: low complexity. Polar residues-rich tracts occupy residues 326–344 (QAVQSTPVAKEQASSCPAS) and 372–397 (PGHQDSVQSRVTSPSHLCQAIKSPSK). The region spanning 429–536 (WFKPSITREQ…ALPCKLTIPQ (108 aa)) is the SH2 domain. Positions 563–690 (CHTLYLSSVS…QVISLVTALL (128 aa)) constitute a PTB domain.

Belongs to the PTEN phosphatase protein family. In terms of assembly, interacts (via SH2 domain) with Rho GTPase-activating protein DLC1 (via C-terminus); the interaction is independent of DLC1 tyrosine phosphorylation. Interacts with integrin ITGB1; the interaction displaces tensin TNS3 from the ITGB1 cytoplasmic tail and promotes ITGB1 stability. Interacts (via SH2 domain) with E3 ubiquitin-protein ligase CBL (phosphorylated on 'Tyr-780'); the interaction is enhanced in the presence of EGF and reduces interaction of CBL with EGFR. Interacts (via SH2 domain) with receptor tyrosine kinase MET (when phosphorylated); the interaction increases MET protein stability.

The protein localises to the cell junction. It localises to the focal adhesion. Its subcellular location is the cytoplasm. The protein resides in the cytoskeleton. Functionally, promotes EGF-induced cell migration by displacing tensin TNS3 from the cytoplasmic tail of integrin ITGB1 which results in dissociation of TNS3 from focal adhesions, disassembly of actin stress fibers and initiation of cell migration. Suppresses ligand-induced degradation of EGFR by reducing EGFR ubiquitination in the presence of EGF. Increases MET protein stability by inhibiting MET endocytosis and subsequent lysosomal degradation which leads to increased cell survival, proliferation and migration. The sequence is that of Tensin-4 (Tns4) from Mus musculus (Mouse).